Here is a 1117-residue protein sequence, read N- to C-terminus: MPATQKPMRYGHTEGHTEVCFDDSGSYIVTCGSDGDVRMWEDLDDDDPKSVNVGEKAFSCALKNGKLVTAVSNNTVQVYTFPEGVPDGILTRFTTNANHVVFNGAGNKIAAGSSDFLVKVVDVMDNSQQQTFRGHDAPVLSLSFDPKDIFLASASCDGTVRVWNISDQTCAVSWPVLQKSNDVVNAKSICRLAWQPKAGKLLAVPVEKSVKLYRRETWSNPFDLSDSSISQTLNIVTWSPCGQYLAAGAINGLIVVWNVETKDCMERVKHEKGYAICGLAWHPTCSRICYTDVEGNLGVLENVCDLSGKVSSNKVSSRVEKDYNDLFDGDDTSSAGDFLNDNAVEIPSFSKGIINEDDDNDDIMLAADHDLGDDENSVDVTMLKADLSHKEEGDDDQARSIHNLPLIRPQRPFYDGPMPTPRQKPFQSSSTPLHLSHRFMVWNSVGIIRCYNDDQDSAIDVEFHDTSIHHATHLLNAFNYTMGTLSHEAILLACESADELASKLHCLHFSSWDSSKEWMVDMPQNEDIEAICLGLGWAAAATTALLLRLFTIGGVQKEVFCLPGPVVSMAGHGEQLCIVYHRGTGFDGDQCLGVQLLELGRKKNQVLHGDPLPLTRKSYLTWLGFSAEGTPCYVDSEGCVRMLNRGLGNTWTPVCNIREHCKGKSDHYWVVGIHENPQQLRCIPCKGSRFPPTLPRPAVAILSFKLPYCQTSTEKGQMEEQFWHSVLFHNYLDYLAKNGYDYEESIKNQAVKEQQELLMKMLALSCKLEREFRCVELADLMTQNAVHLAIKYASRSRKLILAQKLSELAAEKAAELAETQSEEEKEEDFREKLNAGYSHTTTEWSRPRVRSQVEDAEDREDTVSEEKPESHNHGQNLFQSANSSDTPALKSGAVFSSSQGWVNPFKVVVSSKEPAVSANSTRSANILDSMNKSSRKSTSLNRMENNEKSPVIKPLTPKPRSKQASAASYFQKRTPQADKTEEVKENPKSSSSDAPAVCLQNSENQRPKTGFQMWLEENRSQILSDNPDISDETDIIKEGMIRFRVLSAEERKAWTNKAKGETASDGAEAKKRKRVVSEICETENQEETVKENLDLSKKQKALNLPANQKLSAFAFKQ.

WD repeat units lie at residues 11–50 (GHTE…DPKS), 52–91 (NVGE…GILT), 93–131 (FTTN…QQQT), 134–173 (GHDA…CAVS), 184–223 (VNAK…NPFD), 228–267 (SISQ…CMER), and 271–310 (EKGY…SGKV). Phosphoserine occurs at positions 333 and 377. K390 participates in a covalent cross-link: Glycyl lysine isopeptide (Lys-Gly) (interchain with G-Cter in SUMO2). K664 bears the N6-acetyllysine mark. The disordered stretch occupies residues 816–885 (LAETQSEEEK…NLFQSANSSD (70 aa)). T819 carries the post-translational modification Phosphothreonine. S821 bears the Phosphoserine mark. The segment covering 861 to 872 (DTVSEEKPESHN) has biased composition (basic and acidic residues). Residues 873–885 (HGQNLFQSANSSD) are compositionally biased toward polar residues. S910 and S923 each carry phosphoserine. The tract at residues 911–1005 (SKEPAVSANS…AVCLQNSENQ (95 aa)) is disordered. Positions 917–943 (SANSTRSANILDSMNKSSRKSTSLNRM) are enriched in polar residues. K953 bears the N6-acetyllysine mark. Polar residues predominate over residues 962-974 (KQASAASYFQKRT). Basic and acidic residues predominate over residues 975–987 (PQADKTEEVKENP). Polar residues predominate over residues 988–1004 (KSSSSDAPAVCLQNSEN). The HMG box DNA-binding region spans 1004–1073 (NQRPKTGFQM…SDGAEAKKRK (70 aa)). S1030 carries the post-translational modification Phosphoserine. Positions 1054–1074 (WTNKAKGETASDGAEAKKRKR) are disordered. A Glycyl lysine isopeptide (Lys-Gly) (interchain with G-Cter in SUMO1); alternate cross-link involves residue K1116. K1116 is covalently cross-linked (Glycyl lysine isopeptide (Lys-Gly) (interchain with G-Cter in SUMO2); alternate).

As to quaternary structure, trimer. Interacts with the polymerase alpha catalytic subunit POLA1. Interacts with MCM10. Interacts with DNA2. Interacts with CDC45 and GINS2 subunit of GINS complex; these interactions associate WDHD1 with the CMG helicase complex.

It is found in the nucleus. Its subcellular location is the nucleoplasm. Its function is as follows. Core replisome component that acts as a replication initiation factor. Binds directly to the CMG complex and functions as a hub to recruit additional proteins to the replication fork. The polypeptide is WD repeat and HMG-box DNA-binding protein 1 (Wdhd1) (Mus musculus (Mouse)).